The chain runs to 2493 residues: MKAAAQSNSKNYVFLPFSKRVENLKIDVAHKIPRAADLEDEDVESYFISCLRKWEDLNLSTHYVNFLRSVTPYSQSLPQIVYHQKTIFDLIVQYAREGDSLSLQPILELLTQFARDLALEFASYIDQTLELLCILVQNNELEVVDWSFHAAAYLFKYLRKILAPRLIHTYDILSPLLGKEKQKSHVTRFTAEALSFLCKTVSYENAIEFTGHVLLDLNDHYTPQYHEGVVILFSRIIQGVDTSIHFKGKAFFEILLRSEIYTLPRSKSVIIPVLISTIHHCTSDSFNELEKLIISKITGEPLLYINLFKATLVTRKGSRVSDYPSFFKAYLQIPNLVSWENIESDLSVLIFEISALLFVYPQISDLMPHTVRIISFLQQGPLHLFFSFVDVVKQLNMQRYDSFIKPSLPKFISSLVSDESQKSLAILESVLDNSVPVPVDVASVSLNHFVYCIERLQIVSPSYEDIISLWSSLMIIISSSLGSDEIYKACLLFLRKLEDVSSESVLLGDICGIVLHLLQRKVSRLFLDSSYYKPILDSLLGVFGFLADSKVFLESIRPFFGTSYDFCSSYTSLMDRLINNLSRGLTSLRAASIDLIIALCKSLQKNEVLQSLSLVKKLSELPFDPSTSRDASVLLRNLSAKSSALEKDTRRVVLHALLGLTITRFTPLWPDLSRTAASIVTKEVEDEFLAIIYSWLSLPSPPSGLLGPTDTAVFVKPDLSLEKLPTLEINTFNCPAISYFETSFDECFSKFASSDNYIIGNLLKTNQEDLSNLPTFRSQALRVLNELPEIASRNINVLDNYLFSLQHGFDLNTEWARPDVYLLLGLYSKFTGIKEFVNRDARKEFFLWALTINDPKVQKLVLDIILLYSEEAITTYEENLRNLLDDKKCRDELITFLFVDYADSKIQDIHRPLLMPVVISILYGKMVSKGYGGQKNQAARRSTILSALGNMQVEDLQILVDIMLRPYNGLEVKLNANNNLEIDTGNIPSLTLRRQIGFLTMTEELLLQISSKLSSVAPKILNAVLYNLVVSDDQISSQEAFENFEVKMAYTVRQLSLKVFLLFLKSCSDVDFKPYNVFIYTAFVVPRLDRFADENTQSVSNLMKIFRCWFENEAYLDSVLEFSSHILTALLNTASHTAVKLPVLLYILDTLNLVITHLQSEESESQLREKILANLVMPNITLIFASLSNILKNPQFCNNNRVMDGSVQALSAVSEYMSLDIDSSPLLNLLVSFLRKPNRLVPSNVKSNILVLLCKLLPTNTKWLHASISQTNDFDTIMHLYTSMVDIKARQHLNDLLKIYSTIDDNLIFSSVFVEEINSISKKRLDEPDFERRLSAFTSFNEKHFSLISDLAWLPVLYNFFFYVQDAEELAIRASASLGIKRFIESITMNDASNQFKIDVFVKFIFPFIKNQMKNKNELIRQEFIGLLSYSIKSLTMVDAISDMQPLLYEGDEEANFFNNILHIQLHRRKRAMKRLVNVCAIGVIRSGNISQIFLPLLENFCLGNDTVQTLLDESVITIGEIIKWAHWNQYQAILKRYVSLLKNNAIDQKVVVRLITAVVSALRPLDDAVASYTNSEMNIEQFDGQKKKCVLASSLPSEERFTEVLTNDFFPTLMLYLHIRDESTVTLRVAIALSIVQLVALLPEEEIVLRLTPVLIDTCHILRSRSLESRDATRKALAAISKFLGPKYFSFIISQLQTSLKRGYQLHVLGYTVHYLLLAIEDVYPYGSIDYCMDSLAQIFVDEIFGEVGVEKDSEDYKSNVKEIKGNKSYDSYEIVARISSFDSLSTLLRPVKNVLFETNVPKSLRKVDELCRRLSLGIVANKQSASQSSLIFCYNVYEFVVKEKETVAALKQQENDGYRSAPNFFLENSKKLIRFTFDVLRGVSNKHKELLTARNMAAFVPLIGESLLSSSEEVQISALRFLVLLLPLKIDQVFSGSSVFTSQAVKYIQNSPSTNTELCQASFKFLASILPYENVKIKESTINYLLERVGTDIQEPDRQGVMFSLVRAVIARKIMTPELYKIIDLIRDMMVTNHTKSTRQTCRHLYYSFLLDYPQGKTRLSKQISFILKNLEYEFAPGRESVMELLHLILNNFSDALLKEYHQGIFIALVMVLANDSEPHCREMSAELIKLVYQRADNENFNLIRQLLSHWTSVEKAGKNLVRVSMQLFGLLFETFGFERMEEVHLFTKVFERVLSTTISHPEEATNEWELNYFGLQSWLKLVLADPKKSCEKEFSKIWESMRYLILFKHAWVRLSVSRLFGHFFAIIGDSNFGKLSLGIDGVVFSLDFVTQISNALQAQLRSPVLSEELGMQVAKNLIFLTRWFNSIRSSDDSPFLEIFRRMRKTLKKQTIEEYSINKKYLMQWFASVIHVFSGEELQPVLSEIIAALYRYTELQEAERKSQQELADLVTESLQVLQEKVGATVFARAYQEVRNAAIEVRRERREKRAIEQVVAPEVASRKKIRKNERKRENRKQKTNHHRMVNSIFKNR.

HEAT repeat units follow at residues 265 to 303, 402 to 439, 568 to 605, 913 to 957, 1145 to 1186, 1221 to 1262, 1400 to 1437, 1605 to 1645, 1647 to 1687, 1896 to 1933, and 2082 to 2120; these read RSKS…EPLL, SFIK…PVPV, SSYT…SLQK, LLMP…EDLQ, LYIL…IFAS, IDSS…TNTK, VFVK…SLTM, VLTN…LLPE, EIVL…FLGP, RNMA…LKID, and ESVM…NDSE. Residues 2393 to 2454 adopt a coiled-coil conformation; the sequence is RYTELQEAER…ERREKRAIEQ (62 aa). Over residues 2463–2485 the composition is skewed to basic residues; sequence RKKIRKNERKRENRKQKTNHHRM. Residues 2463–2493 form a disordered region; sequence RKKIRKNERKRENRKQKTNHHRMVNSIFKNR.

It belongs to the UTP20 family. In terms of assembly, interacts with snoRNA U3. Component of the ribosomal small subunit (SSU) processome composed of at least 40 protein subunits and snoRNA U3.

The protein localises to the nucleus. Its subcellular location is the nucleolus. Involved in nucleolar processing of pre-18S ribosomal RNA and ribosome assembly. This Schizosaccharomyces pombe (strain 972 / ATCC 24843) (Fission yeast) protein is U3 small nucleolar RNA-associated protein 20 (utp20).